Consider the following 397-residue polypeptide: Acetate kinase (397 aa).

Asn8 lines the Mg(2+) pocket. Position 15 (Lys15) interacts with ATP. Arg89 contributes to the substrate binding site. The active-site Proton donor/acceptor is Asp146. ATP is bound by residues 206–210, 283–285, and 331–335; these read HVGNG, DMR, and GMGEN. Glu383 lines the Mg(2+) pocket.

Belongs to the acetokinase family. In terms of assembly, homodimer. It depends on Mg(2+) as a cofactor. The cofactor is Mn(2+).

The protein resides in the cytoplasm. It catalyses the reaction acetate + ATP = acetyl phosphate + ADP. The protein operates within metabolic intermediate biosynthesis; acetyl-CoA biosynthesis; acetyl-CoA from acetate: step 1/2. Catalyzes the formation of acetyl phosphate from acetate and ATP. Can also catalyze the reverse reaction. The protein is Acetate kinase of Streptococcus agalactiae serotype III (strain NEM316).